Consider the following 295-residue polypeptide: Phosphatidylserine decarboxylase proenzyme (295 aa).

Residues Asp113, His169, and Ser256 each act as charge relay system; for autoendoproteolytic cleavage activity in the active site. Ser256 functions as the Schiff-base intermediate with substrate; via pyruvic acid; for decarboxylase activity in the catalytic mechanism. Ser256 is modified (pyruvic acid (Ser); by autocatalysis).

Belongs to the phosphatidylserine decarboxylase family. PSD-B subfamily. Prokaryotic type II sub-subfamily. Heterodimer of a large membrane-associated beta subunit and a small pyruvoyl-containing alpha subunit. The cofactor is pyruvate. In terms of processing, is synthesized initially as an inactive proenzyme. Formation of the active enzyme involves a self-maturation process in which the active site pyruvoyl group is generated from an internal serine residue via an autocatalytic post-translational modification. Two non-identical subunits are generated from the proenzyme in this reaction, and the pyruvate is formed at the N-terminus of the alpha chain, which is derived from the carboxyl end of the proenzyme. The autoendoproteolytic cleavage occurs by a canonical serine protease mechanism, in which the side chain hydroxyl group of the serine supplies its oxygen atom to form the C-terminus of the beta chain, while the remainder of the serine residue undergoes an oxidative deamination to produce ammonia and the pyruvoyl prosthetic group on the alpha chain. During this reaction, the Ser that is part of the protease active site of the proenzyme becomes the pyruvoyl prosthetic group, which constitutes an essential element of the active site of the mature decarboxylase.

It is found in the cell membrane. It carries out the reaction a 1,2-diacyl-sn-glycero-3-phospho-L-serine + H(+) = a 1,2-diacyl-sn-glycero-3-phosphoethanolamine + CO2. It functions in the pathway phospholipid metabolism; phosphatidylethanolamine biosynthesis; phosphatidylethanolamine from CDP-diacylglycerol: step 2/2. Functionally, catalyzes the formation of phosphatidylethanolamine (PtdEtn) from phosphatidylserine (PtdSer). The chain is Phosphatidylserine decarboxylase proenzyme from Clostridium novyi (strain NT).